We begin with the raw amino-acid sequence, 241 residues long: Dephospho-CoA kinase CAB5 (241 aa).

A DPCK domain is found at 3 to 211; sequence VVGLTGGIAC…PSKLRTVLEY (209 aa). Residue 8–15 coordinates ATP; it reads GGIACGKS.

It belongs to the CoaE family.

The protein resides in the endoplasmic reticulum. It is found in the mitochondrion. Its subcellular location is the nucleus. The enzyme catalyses 3'-dephospho-CoA + ATP = ADP + CoA + H(+). It participates in cofactor biosynthesis; coenzyme A biosynthesis; CoA from (R)-pantothenate: step 5/5. In terms of biological role, catalyzes the phosphorylation of the 3'-hydroxyl group of dephosphocoenzyme A to form coenzyme A. This Saccharomyces cerevisiae (strain ATCC 204508 / S288c) (Baker's yeast) protein is Dephospho-CoA kinase CAB5 (CAB5).